The sequence spans 357 residues: Peptide chain release factor 1 (357 aa).

At glutamine 232 the chain carries N5-methylglutamine. Residues 284-304 (AERAAERKGQIGSGDRSERIR) show a composition bias toward basic and acidic residues. The disordered stretch occupies residues 284–308 (AERAAERKGQIGSGDRSERIRTYNY).

It belongs to the prokaryotic/mitochondrial release factor family. Post-translationally, methylated by PrmC. Methylation increases the termination efficiency of RF1.

It is found in the cytoplasm. In terms of biological role, peptide chain release factor 1 directs the termination of translation in response to the peptide chain termination codons UAG and UAA. In Maricaulis maris (strain MCS10) (Caulobacter maris), this protein is Peptide chain release factor 1.